Reading from the N-terminus, the 61-residue chain is Small ribosomal subunit protein uS14 (61 aa).

Residues cysteine 24, cysteine 27, cysteine 40, and cysteine 43 each contribute to the Zn(2+) site.

Belongs to the universal ribosomal protein uS14 family. Zinc-binding uS14 subfamily. In terms of assembly, part of the 30S ribosomal subunit. Contacts proteins S3 and S10. Zn(2+) serves as cofactor.

Its function is as follows. Binds 16S rRNA, required for the assembly of 30S particles and may also be responsible for determining the conformation of the 16S rRNA at the A site. This Clostridium botulinum (strain 657 / Type Ba4) protein is Small ribosomal subunit protein uS14.